We begin with the raw amino-acid sequence, 951 residues long: Cadmium/zinc-transporting ATPase HMA2 (951 aa).

Over methionine 1 to lysine 83 the chain is Cytoplasmic. The HMA domain occupies threonine 7–asparagine 73. A helical membrane pass occupies residues asparagine 84 to tyrosine 105. Topologically, residues leucine 106 to serine 108 are extracellular. Residues proline 109–lysine 128 form a helical membrane-spanning segment. Over alanine 129–arginine 135 the chain is Cytoplasmic. The chain crosses the membrane as a helical span at residues phenylalanine 136–aspartate 156. Residue tyrosine 157 is a topological domain, extracellular. The helical transmembrane segment at threonine 158–serine 178 threads the bilayer. At tyrosine 179–lysine 304 the chain is on the cytoplasmic side. A helical membrane pass occupies residues cysteine 305–leucine 327. Residues lysine 328 to tryptophan 335 lie on the Extracellular side of the membrane. A helical transmembrane segment spans residues valine 336–leucine 353. At serine 354–valine 647 the chain is on the cytoplasmic side. Aspartate 391 (4-aspartylphosphate intermediate) is an active-site residue. Aspartate 592 and aspartate 596 together coordinate Mg(2+). A helical membrane pass occupies residues valine 648–alanine 667. The Extracellular portion of the chain corresponds to glycine 668–leucine 671. The helical transmembrane segment at isoleucine 672–methionine 691 threads the bilayer. At leucine 692–glutamate 951 the chain is on the cytoplasmic side. Residues glutamate 841 to serine 851 show a composition bias toward basic and acidic residues. Residues glutamate 841–threonine 866 form a disordered region.

The protein belongs to the cation transport ATPase (P-type) (TC 3.A.3) family. Type IB subfamily. In terms of tissue distribution, predominantly expressed in the vascular tissues of roots, stems, and leaves. Also detected in developing anthers.

Its subcellular location is the cell membrane. The enzyme catalyses Zn(2+)(in) + ATP + H2O = Zn(2+)(out) + ADP + phosphate + H(+). It catalyses the reaction Cd(2+)(in) + ATP + H2O = Cd(2+)(out) + ADP + phosphate + H(+). Plays an important role in zinc transport and homeostasis. Could also be involved in cadmium detoxification. In Arabidopsis thaliana (Mouse-ear cress), this protein is Cadmium/zinc-transporting ATPase HMA2 (HMA2).